Consider the following 517-residue polypeptide: Probable mannosyltransferase KTR7 (517 aa).

Residues 1 to 23 (MAIRLNPKVRRFLLDKCRQKRYG) are Cytoplasmic-facing. A helical; Signal-anchor for type II membrane protein membrane pass occupies residues 24–44 (FLFLGCIFAILYCMGTWPFFA). The tract at residues 45-85 (KDIVHDPNNLPYSLQDYSTDKDEPFFRGCTDTKLYLQNPAY) is stem region. Topologically, residues 45–517 (KDIVHDPNNL…IRRENFRVIE (473 aa)) are lumenal. The catalytic stretch occupies residues 86–517 (SKMNASFVML…IRRENFRVIE (432 aa)). N-linked (GlcNAc...) asparagine glycans are attached at residues Asn89 and Asn144. The active-site Nucleophile is the Glu367.

The protein belongs to the glycosyltransferase 15 family.

The protein localises to the membrane. Possible glycosyltransferase that transfers an alpha-D-mannosyl residue from GDP-mannose into lipid-linked oligosaccharide, forming an alpha-(1-&gt;2)-D-mannosyl-D-mannose linkage. This chain is Probable mannosyltransferase KTR7 (KTR7), found in Saccharomyces cerevisiae (strain ATCC 204508 / S288c) (Baker's yeast).